Consider the following 534-residue polypeptide: Peptide chain release factor 3 (534 aa).

Residues 9 to 278 (ARRRTFAIIS…FFVEHAPPPQ (270 aa)) form the tr-type G domain. GTP-binding positions include 18-25 (SHPDAGKT), 86-90 (DTPGH), and 140-143 (NKLD).

It belongs to the TRAFAC class translation factor GTPase superfamily. Classic translation factor GTPase family. PrfC subfamily.

The protein resides in the cytoplasm. Functionally, increases the formation of ribosomal termination complexes and stimulates activities of RF-1 and RF-2. It binds guanine nucleotides and has strong preference for UGA stop codons. It may interact directly with the ribosome. The stimulation of RF-1 and RF-2 is significantly reduced by GTP and GDP, but not by GMP. The sequence is that of Peptide chain release factor 3 from Xanthomonas euvesicatoria pv. vesicatoria (strain 85-10) (Xanthomonas campestris pv. vesicatoria).